We begin with the raw amino-acid sequence, 367 residues long: Phosphoribosylaminoimidazole-succinocarboxamide synthase (367 aa).

It belongs to the SAICAR synthetase family.

The catalysed reaction is 5-amino-1-(5-phospho-D-ribosyl)imidazole-4-carboxylate + L-aspartate + ATP = (2S)-2-[5-amino-1-(5-phospho-beta-D-ribosyl)imidazole-4-carboxamido]succinate + ADP + phosphate + 2 H(+). Its pathway is purine metabolism; IMP biosynthesis via de novo pathway; 5-amino-1-(5-phospho-D-ribosyl)imidazole-4-carboxamide from 5-amino-1-(5-phospho-D-ribosyl)imidazole-4-carboxylate: step 1/2. The polypeptide is Phosphoribosylaminoimidazole-succinocarboxamide synthase (Shewanella putrefaciens (strain CN-32 / ATCC BAA-453)).